A 309-amino-acid polypeptide reads, in one-letter code: Porphobilinogen deaminase (309 aa).

S-(dipyrrolylmethanemethyl)cysteine is present on C242.

It belongs to the HMBS family. In terms of assembly, monomer. Dipyrromethane is required as a cofactor.

It catalyses the reaction 4 porphobilinogen + H2O = hydroxymethylbilane + 4 NH4(+). Its pathway is porphyrin-containing compound metabolism; protoporphyrin-IX biosynthesis; coproporphyrinogen-III from 5-aminolevulinate: step 2/4. Its function is as follows. Tetrapolymerization of the monopyrrole PBG into the hydroxymethylbilane pre-uroporphyrinogen in several discrete steps. This Shewanella woodyi (strain ATCC 51908 / MS32) protein is Porphobilinogen deaminase.